A 1081-amino-acid polypeptide reads, in one-letter code: Mediator of RNA polymerase II transcription subunit 15 (1081 aa).

N-acetylserine is present on Ser2. Positions 25–49 (LQVLMDINTLNGGSSDTADKIRIHA) are interaction with GCN4. Residues 238–286 (QAQAQANNNNNGLPQNGNINNNINIPQQQQMQPPNSSANNNPLQQQSSQ) are disordered. A Phosphoserine modification is found at Ser335. A run of 11 repeats spans residues 422–423 (QA), 424–425 (QA), 426–427 (QA), 428–429 (QA), 430–431 (QA), 432–433 (QA), 434–435 (QA), 436–437 (QA), 438–439 (QA), 440–441 (QA), and 442–443 (QA). The segment at 422–481 (QAQAQAQAQAQAQAQAQAQAQAAQAAQAQAQAQAQAQAQAQAQAQAQAQAQAQAQAQAQA) is 30 X 2 AA approximate tandem repeats of Q-A. The stretch at 444-445 (AQ) is one 12; approximate repeat. One copy of the 13; approximate repeat lies at 446–447 (AA). 17 repeat units span residues 448–449 (QA), 450–451 (QA), 452–453 (QA), 454–455 (QA), 456–457 (QA), 458–459 (QA), 460–461 (QA), 462–463 (QA), 464–465 (QA), 466–467 (QA), 468–469 (QA), 470–471 (QA), 472–473 (QA), 474–475 (QA), 476–477 (QA), 478–479 (QA), and 480–481 (QA). Residues 476 to 497 (QAQAQAHAQHQPSQQPQQAQQQ) are compositionally biased toward low complexity. Disordered regions lie at residues 476–505 (QAQA…HGLT) and 692–712 (QQQQ…YSAM). Residues Ser736, Ser752, Ser783, Ser785, and Ser789 each carry the phosphoserine modification. Residues 744-836 (PVSAAATPSL…KTVQSPMGAQ (93 aa)) are disordered. Residues 749–836 (ATPSLNKTIN…KTVQSPMGAQ (88 aa)) are compositionally biased toward polar residues. Thr793 carries the phosphothreonine modification. 5 positions are modified to phosphoserine: Ser831, Ser1003, Ser1008, Ser1018, and Ser1034. The disordered stretch occupies residues 1026–1055 (DSKKIKVDSPDDPFMTKSGATTSEKQEVTN).

It belongs to the Mediator complex subunit 15 family. In terms of assembly, component of the Mediator complex, which is composed of at least 21 subunits that form three structurally distinct submodules. The Mediator head module contains MED6, MED8, MED11, SRB4/MED17, SRB5/MED18, ROX3/MED19, SRB2/MED20 and SRB6/MED22, the middle module contains MED1, MED4, NUT1/MED5, MED7, CSE2/MED9, NUT2/MED10, SRB7/MED21 and SOH1/MED31, and the tail module contains MED2, PGD1/MED3, RGR1/MED14, GAL11/MED15 and SIN4/MED16. The head and the middle modules interact directly with RNA polymerase II, whereas the elongated tail module interacts with gene-specific regulatory proteins. GAL11/MED15 interacts with the activator GAL4; the interaction is direct. GAL11/MED15 interacts (via multiple regions) with the activator GCN4; the interaction is direct.

It localises to the nucleus. Its function is as follows. Component of the Mediator complex, a coactivator involved in the regulated transcription of nearly all RNA polymerase II-dependent genes. Mediator functions as a bridge to convey information from gene-specific regulatory proteins to the basal RNA polymerase II transcription machinery. The Mediator complex, having a compact conformation in its free form, is recruited to promoters by direct interactions with regulatory proteins and serves for the assembly of a functional pre-initiation complex with RNA polymerase II and the general transcription factors. The Mediator complex unfolds to an extended conformation and partially surrounds RNA polymerase II, specifically interacting with the unphosphorylated form of the C-terminal domain (CTD) of RNA polymerase II. The Mediator complex dissociates from the RNA polymerase II holoenzyme and stays at the promoter when transcriptional elongation begins. It has an important role in the negative regulation of Ty transcription. This chain is Mediator of RNA polymerase II transcription subunit 15, found in Saccharomyces cerevisiae (strain ATCC 204508 / S288c) (Baker's yeast).